Reading from the N-terminus, the 197-residue chain is Ribonuclease HII (197 aa).

In terms of domain architecture, RNase H type-2 spans 3–192 (QLIAGVDEVG…VQLSLMQRGG (190 aa)). Residues D9, E10, and D101 each coordinate a divalent metal cation.

This sequence belongs to the RNase HII family. Mn(2+) serves as cofactor. The cofactor is Mg(2+).

It localises to the cytoplasm. The enzyme catalyses Endonucleolytic cleavage to 5'-phosphomonoester.. Functionally, endonuclease that specifically degrades the RNA of RNA-DNA hybrids. The protein is Ribonuclease HII of Pseudoalteromonas atlantica (strain T6c / ATCC BAA-1087).